The chain runs to 159 residues: NADH-quinone oxidoreductase subunit I (159 aa).

4Fe-4S ferredoxin-type domains lie at 51–80 (RRYESGEERCIACKLCEAICPAQAIVIEAD) and 90–119 (TRYDIDMTKCIYCGLCQEACPVDAIVEGPN). Residues cysteine 60, cysteine 63, cysteine 66, cysteine 70, cysteine 99, cysteine 102, cysteine 105, and cysteine 109 each contribute to the [4Fe-4S] cluster site.

Belongs to the complex I 23 kDa subunit family. In terms of assembly, NDH-1 is composed of 14 different subunits. Subunits NuoA, H, J, K, L, M, N constitute the membrane sector of the complex. [4Fe-4S] cluster is required as a cofactor.

Its subcellular location is the cell inner membrane. The catalysed reaction is a quinone + NADH + 5 H(+)(in) = a quinol + NAD(+) + 4 H(+)(out). In terms of biological role, NDH-1 shuttles electrons from NADH, via FMN and iron-sulfur (Fe-S) centers, to quinones in the respiratory chain. The immediate electron acceptor for the enzyme in this species is believed to be ubiquinone. Couples the redox reaction to proton translocation (for every two electrons transferred, four hydrogen ions are translocated across the cytoplasmic membrane), and thus conserves the redox energy in a proton gradient. The polypeptide is NADH-quinone oxidoreductase subunit I (Rickettsia akari (strain Hartford)).